Consider the following 446-residue polypeptide: Tubulin beta-5 chain (446 aa).

Residues 1-4 (MREI) carry the MREI motif motif. 8 residues coordinate GTP: glutamine 11, glutamate 69, serine 138, glycine 142, threonine 143, glycine 144, asparagine 204, and asparagine 226. Glutamate 69 is a binding site for Mg(2+). At glutamate 438 the chain carries 5-glutamyl polyglutamate.

It belongs to the tubulin family. In terms of assembly, dimer of alpha and beta chains. A typical microtubule is a hollow water-filled tube with an outer diameter of 25 nm and an inner diameter of 15 nM. Alpha-beta heterodimers associate head-to-tail to form protofilaments running lengthwise along the microtubule wall with the beta-tubulin subunit facing the microtubule plus end conferring a structural polarity. Microtubules usually have 13 protofilaments but different protofilament numbers can be found in some organisms and specialized cells. Requires Mg(2+) as cofactor. Some glutamate residues at the C-terminus are polyglycylated, resulting in polyglycine chains on the gamma-carboxyl group. Glycylation is mainly limited to tubulin incorporated into axonemes (cilia and flagella) whereas glutamylation is prevalent in neuronal cells, centrioles, axonemes, and the mitotic spindle. Both modifications can coexist on the same protein on adjacent residues, and lowering polyglycylation levels increases polyglutamylation, and reciprocally. The precise function of polyglycylation is still unclear. In terms of processing, some glutamate residues at the C-terminus are polyglutamylated, resulting in polyglutamate chains on the gamma-carboxyl group. Polyglutamylation plays a key role in microtubule severing by spastin (SPAST). SPAST preferentially recognizes and acts on microtubules decorated with short polyglutamate tails: severing activity by SPAST increases as the number of glutamates per tubulin rises from one to eight, but decreases beyond this glutamylation threshold.

The protein localises to the cytoplasm. Its subcellular location is the cytoskeleton. In terms of biological role, tubulin is the major constituent of microtubules, a cylinder consisting of laterally associated linear protofilaments composed of alpha- and beta-tubulin heterodimers. Microtubules grow by the addition of GTP-tubulin dimers to the microtubule end, where a stabilizing cap forms. Below the cap, tubulin dimers are in GDP-bound state, owing to GTPase activity of alpha-tubulin. In Gallus gallus (Chicken), this protein is Tubulin beta-5 chain.